The primary structure comprises 603 residues: Adenine deaminase (603 aa).

The protein belongs to the metallo-dependent hydrolases superfamily. Adenine deaminase family. Mn(2+) serves as cofactor.

It carries out the reaction adenine + H2O + H(+) = hypoxanthine + NH4(+). This Ruegeria pomeroyi (strain ATCC 700808 / DSM 15171 / DSS-3) (Silicibacter pomeroyi) protein is Adenine deaminase.